The chain runs to 689 residues: Centrosomal protein of 78 kDa (689 aa).

A phosphoserine mark is found at S325 and S327. Disordered stretches follow at residues 432–451 (SSEV…VPEK), 563–589 (PQMT…EPKQ), and 614–689 (DSFP…TESH). A coiled-coil region spans residues 450–505 (EKTSIEQEALQEKLEECLKQLKEERVIRLKVDKRVSELEHENAQLRNINFSLSEAL). 2 stretches are compositionally biased toward basic and acidic residues: residues 573–587 (PKEE…KPEP) and 666–689 (QRKE…TESH).

It belongs to the CEP78 family. Interacts with PLK4. Interacts with FAM161A. Interacts with IFT20; regulating IFT20 stability and localization. Interacts with TTC21A; regulating TTC21A stability and localization. Interacts with USP16; promoting USP16-dependent deubiquitination of tektins. Interacts with DCAF1/VPRBP; promoting localization of the EDVP complex to centrosomes. Interacts with CEP350; promoting CEP78 localization to centrosome and centriole. Widely expressed. Expressed in different retinal cell types with higher expression in cone compared to rod cells (at protein level).

It localises to the cytoplasm. It is found in the cytoskeleton. The protein localises to the microtubule organizing center. The protein resides in the centrosome. Its subcellular location is the centriole. It localises to the cilium basal body. Functionally, centriole wall protein that localizes to mature centrioles and regulates centriole and cilia biogenesis. Involved in centrosome duplication: required for efficient PLK4 centrosomal localization and PLK4-induced overduplication of centrioles. Involved in cilium biogenesis and controls cilium length. Acts as a regulator of protein stability by preventing ubiquitination of centrosomal proteins, such as CCP110 and tektins. Associates with the EDVP complex, preventing ubiquitination and degradation of CCP110. Promotes deubiquitination of tektin proteins (TEKT1, TEKT2, TEK3, TEKT4 and TEKT5) via its interaction with USP16. The sequence is that of Centrosomal protein of 78 kDa from Homo sapiens (Human).